The chain runs to 102 residues: MANKKIRIRLKAYEHRTLDTAAAKIVESATRTGAQVAGPIPLPTERSLYTIIRATHKYKDSREQFEMRTHKRLIDIVNPTQKTVDALMKLDLPSGVNVEIKL.

The protein belongs to the universal ribosomal protein uS10 family. As to quaternary structure, part of the 30S ribosomal subunit.

In terms of biological role, involved in the binding of tRNA to the ribosomes. This is Small ribosomal subunit protein uS10 from Streptococcus pneumoniae (strain CGSP14).